The sequence spans 901 residues: Protein translocase subunit SecA (901 aa).

ATP contacts are provided by residues Gln-87, 105–109, and Asp-512; that span reads GEGKT. 4 residues coordinate Zn(2+): Cys-885, Cys-887, Cys-896, and His-897.

It belongs to the SecA family. As to quaternary structure, monomer and homodimer. Part of the essential Sec protein translocation apparatus which comprises SecA, SecYEG and auxiliary proteins SecDF-YajC and YidC. Zn(2+) is required as a cofactor.

It is found in the cell inner membrane. It localises to the cytoplasm. It catalyses the reaction ATP + H2O + cellular proteinSide 1 = ADP + phosphate + cellular proteinSide 2.. Part of the Sec protein translocase complex. Interacts with the SecYEG preprotein conducting channel. Has a central role in coupling the hydrolysis of ATP to the transfer of proteins into and across the cell membrane, serving both as a receptor for the preprotein-SecB complex and as an ATP-driven molecular motor driving the stepwise translocation of polypeptide chains across the membrane. This Salmonella schwarzengrund (strain CVM19633) protein is Protein translocase subunit SecA.